Here is a 323-residue protein sequence, read N- to C-terminus: 1D-myo-inositol 2-acetamido-2-deoxy-alpha-D-glucopyranoside deacetylase (323 aa).

Positions 28, 31, and 163 each coordinate Zn(2+).

Belongs to the MshB deacetylase family. The cofactor is Zn(2+).

The enzyme catalyses 1D-myo-inositol 2-acetamido-2-deoxy-alpha-D-glucopyranoside + H2O = 1D-myo-inositol 2-amino-2-deoxy-alpha-D-glucopyranoside + acetate. In terms of biological role, catalyzes the deacetylation of 1D-myo-inositol 2-acetamido-2-deoxy-alpha-D-glucopyranoside (GlcNAc-Ins) in the mycothiol biosynthesis pathway. This is 1D-myo-inositol 2-acetamido-2-deoxy-alpha-D-glucopyranoside deacetylase from Streptomyces scabiei (strain 87.22).